Consider the following 360-residue polypeptide: Transcriptional coactivator MYCFIDRAFT_190109 (360 aa).

In terms of domain architecture, HTH iclR-type spans 3–67; it reads GMALNQLLAC…GFLHEPRPGQ (65 aa). The H-T-H motif DNA-binding region spans 33–52; that stretch reads ARDVADLTGVPETQLCRVVR.

Its subcellular location is the nucleus. In terms of biological role, transcriptional coactivator; part of the gene cluster that mediates the biosynthesis of an emodin derivative that may be involved in black Sigatoka disease of banana. With MYCFIDRAFT_198930, coregulates the production of the PKS8-1 cluster product. This Pseudocercospora fijiensis (strain CIRAD86) (Black leaf streak disease fungus) protein is Transcriptional coactivator MYCFIDRAFT_190109.